The chain runs to 255 residues: Taurine import ATP-binding protein TauB (255 aa).

Residues 2–229 (LQISHLYADY…RFVAGESSRS (228 aa)) enclose the ABC transporter domain. 34 to 41 (GPSGCGKT) serves as a coordination point for ATP.

Belongs to the ABC transporter superfamily. Taurine importer (TC 3.A.1.17.1) family. In terms of assembly, the complex is composed of two ATP-binding proteins (TauB), two transmembrane proteins (TauC) and a solute-binding protein (TauA).

The protein localises to the cell inner membrane. The enzyme catalyses taurine(out) + ATP + H2O = taurine(in) + ADP + phosphate + H(+). Its function is as follows. Part of the ABC transporter complex TauABC involved in taurine import. Responsible for energy coupling to the transport system. The polypeptide is Taurine import ATP-binding protein TauB (Shigella flexneri serotype 5b (strain 8401)).